The chain runs to 249 residues: Flavin-dependent thymidylate synthase (249 aa).

The ThyX domain maps to 8-225 (VKVKLLEYTP…PNLFKYSGPS (218 aa)). Residues serine 62, 86-88 (RHR), and glutamine 94 each bind FAD. DUMP is bound by residues 83 to 86 (QLVR), 94 to 98 (QQSQR), and arginine 164. A ThyX motif motif is present at residues 86 to 96 (RHRIASYSQQS). Residues 180–182 (NAR) and asparagine 186 contribute to the FAD site. A dUMP-binding site is contributed by arginine 191. Arginine 191 serves as the catalytic Involved in ionization of N3 of dUMP, leading to its activation.

Belongs to the thymidylate synthase ThyX family. Homotetramer. The cofactor is FAD.

The catalysed reaction is dUMP + (6R)-5,10-methylene-5,6,7,8-tetrahydrofolate + NADPH + H(+) = dTMP + (6S)-5,6,7,8-tetrahydrofolate + NADP(+). The protein operates within pyrimidine metabolism; dTTP biosynthesis. Its function is as follows. Catalyzes the reductive methylation of 2'-deoxyuridine-5'-monophosphate (dUMP) to 2'-deoxythymidine-5'-monophosphate (dTMP) while utilizing 5,10-methylenetetrahydrofolate (mTHF) as the methyl donor, and NADPH and FADH(2) as the reductant. This Clostridium tetani (strain Massachusetts / E88) protein is Flavin-dependent thymidylate synthase.